The sequence spans 40 residues: Photosystem II reaction center protein J (40 aa).

The helical transmembrane segment at 8-28 (IPLWVVATIAGLGVITVVGIF) threads the bilayer.

This sequence belongs to the PsbJ family. PSII is composed of 1 copy each of membrane proteins PsbA, PsbB, PsbC, PsbD, PsbE, PsbF, PsbH, PsbI, PsbJ, PsbK, PsbL, PsbM, PsbT, PsbX, PsbY, PsbZ, Psb30/Ycf12, peripheral proteins PsbO, CyanoQ (PsbQ), PsbU, PsbV and a large number of cofactors. It forms dimeric complexes.

The protein localises to the cellular thylakoid membrane. Functionally, one of the components of the core complex of photosystem II (PSII). PSII is a light-driven water:plastoquinone oxidoreductase that uses light energy to abstract electrons from H(2)O, generating O(2) and a proton gradient subsequently used for ATP formation. It consists of a core antenna complex that captures photons, and an electron transfer chain that converts photonic excitation into a charge separation. This chain is Photosystem II reaction center protein J, found in Trichormus variabilis (strain ATCC 29413 / PCC 7937) (Anabaena variabilis).